The sequence spans 312 residues: Ribosomal protein uL3 glutamine methyltransferase (312 aa).

Belongs to the protein N5-glutamine methyltransferase family. PrmB subfamily.

It catalyses the reaction L-glutaminyl-[ribosomal protein uL3] + S-adenosyl-L-methionine = N(5)-methyl-L-glutaminyl-[ribosomal protein uL3] + S-adenosyl-L-homocysteine + H(+). Functionally, methylates large ribosomal subunit protein uL3 on a specific glutamine residue. The protein is Ribosomal protein uL3 glutamine methyltransferase of Xylella fastidiosa (strain Temecula1 / ATCC 700964).